The following is a 102-amino-acid chain: MAKGQSLQDPFLNALRRERVPVSIYLVNGIKLQGQIESFDQFVILLKNTVSQMVYKHAISTVVPSRPVSHHSSNTSVGASVGNYHSGGVSAPAAQQESDGTE.

Residues 9–68 (DPFLNALRRERVPVSIYLVNGIKLQGQIESFDQFVILLKNTVSQMVYKHAISTVVPSRPV) form the Sm domain. A disordered region spans residues 65–102 (SRPVSHHSSNTSVGASVGNYHSGGVSAPAAQQESDGTE). Polar residues predominate over residues 93–102 (AAQQESDGTE).

The protein belongs to the Hfq family. As to quaternary structure, homohexamer.

Functionally, RNA chaperone that binds small regulatory RNA (sRNAs) and mRNAs to facilitate mRNA translational regulation in response to envelope stress, environmental stress and changes in metabolite concentrations. Also binds with high specificity to tRNAs. This Photorhabdus laumondii subsp. laumondii (strain DSM 15139 / CIP 105565 / TT01) (Photorhabdus luminescens subsp. laumondii) protein is RNA-binding protein Hfq.